The chain runs to 280 residues: Pantothenate synthetase (280 aa).

An ATP-binding site is contributed by 31-38; it reads MGNLHVGH. Catalysis depends on His38, which acts as the Proton donor. Gln62 is a binding site for (R)-pantoate. Gln62 is a binding site for beta-alanine. ATP is bound at residue 150 to 153; it reads GKKD. Gln156 contacts (R)-pantoate. ATP-binding positions include Val179 and 187-190; that span reads MSSR.

This sequence belongs to the pantothenate synthetase family. As to quaternary structure, homodimer.

It is found in the cytoplasm. The catalysed reaction is (R)-pantoate + beta-alanine + ATP = (R)-pantothenate + AMP + diphosphate + H(+). It functions in the pathway cofactor biosynthesis; (R)-pantothenate biosynthesis; (R)-pantothenate from (R)-pantoate and beta-alanine: step 1/1. In terms of biological role, catalyzes the condensation of pantoate with beta-alanine in an ATP-dependent reaction via a pantoyl-adenylate intermediate. The polypeptide is Pantothenate synthetase (Xanthomonas oryzae pv. oryzae (strain MAFF 311018)).